The chain runs to 119 residues: Large ribosomal subunit protein uL18 (119 aa).

This sequence belongs to the universal ribosomal protein uL18 family. As to quaternary structure, part of the 50S ribosomal subunit; part of the 5S rRNA/L5/L18/L25 subcomplex. Contacts the 5S and 23S rRNAs.

In terms of biological role, this is one of the proteins that bind and probably mediate the attachment of the 5S RNA into the large ribosomal subunit, where it forms part of the central protuberance. In Borrelia duttonii (strain Ly), this protein is Large ribosomal subunit protein uL18.